The sequence spans 202 residues: Glycerol-3-phosphate acyltransferase (202 aa).

Helical transmembrane passes span 2-22, 80-100, 119-139, and 158-178; these read ANLL…AVVV, LNET…LFPV, AIDP…AFFF, and VLMN…VLLI.

This sequence belongs to the PlsY family. Probably interacts with PlsX.

Its subcellular location is the cell inner membrane. The enzyme catalyses an acyl phosphate + sn-glycerol 3-phosphate = a 1-acyl-sn-glycero-3-phosphate + phosphate. Its pathway is lipid metabolism; phospholipid metabolism. Catalyzes the transfer of an acyl group from acyl-phosphate (acyl-PO(4)) to glycerol-3-phosphate (G3P) to form lysophosphatidic acid (LPA). This enzyme utilizes acyl-phosphate as fatty acyl donor, but not acyl-CoA or acyl-ACP. The sequence is that of Glycerol-3-phosphate acyltransferase from Cupriavidus necator (strain ATCC 17699 / DSM 428 / KCTC 22496 / NCIMB 10442 / H16 / Stanier 337) (Ralstonia eutropha).